A 329-amino-acid polypeptide reads, in one-letter code: Phenylalanine--tRNA ligase alpha subunit (329 aa).

It belongs to the class-II aminoacyl-tRNA synthetase family. Phe-tRNA synthetase alpha subunit type 1 subfamily. Tetramer of two alpha and two beta subunits. It depends on Mg(2+) as a cofactor.

Its subcellular location is the cytoplasm. The enzyme catalyses tRNA(Phe) + L-phenylalanine + ATP = L-phenylalanyl-tRNA(Phe) + AMP + diphosphate + H(+). This chain is Phenylalanine--tRNA ligase alpha subunit (pheS), found in Buchnera aphidicola subsp. Acyrthosiphon pisum (strain APS) (Acyrthosiphon pisum symbiotic bacterium).